We begin with the raw amino-acid sequence, 250 residues long: 3-deoxy-manno-octulosonate cytidylyltransferase (250 aa).

Belongs to the KdsB family.

It is found in the cytoplasm. It catalyses the reaction 3-deoxy-alpha-D-manno-oct-2-ulosonate + CTP = CMP-3-deoxy-beta-D-manno-octulosonate + diphosphate. The protein operates within nucleotide-sugar biosynthesis; CMP-3-deoxy-D-manno-octulosonate biosynthesis; CMP-3-deoxy-D-manno-octulosonate from 3-deoxy-D-manno-octulosonate and CTP: step 1/1. Its pathway is bacterial outer membrane biogenesis; lipopolysaccharide biosynthesis. Activates KDO (a required 8-carbon sugar) for incorporation into bacterial lipopolysaccharide in Gram-negative bacteria. In Legionella pneumophila (strain Corby), this protein is 3-deoxy-manno-octulosonate cytidylyltransferase.